A 160-amino-acid chain; its full sequence is Serine-protein kinase RsbW (160 aa).

This sequence belongs to the anti-sigma-factor family.

The enzyme catalyses L-seryl-[protein] + ATP = O-phospho-L-seryl-[protein] + ADP + H(+). The catalysed reaction is L-threonyl-[protein] + ATP = O-phospho-L-threonyl-[protein] + ADP + H(+). Functionally, negative regulator of sigma-B activity. Phosphorylates and inactivates its specific antagonist protein, RsbV. Upon phosphorylation of RsbV, RsbW is released and binds to sigma-B, thereby blocking its ability to form an RNA polymerase holoenzyme (E-sigma-B). This chain is Serine-protein kinase RsbW, found in Bacillus cereus (strain AH187).